Reading from the N-terminus, the 122-residue chain is Large ribosomal subunit protein uL14c (122 aa).

It belongs to the universal ribosomal protein uL14 family. Part of the 50S ribosomal subunit.

It is found in the plastid. It localises to the chloroplast. Functionally, binds to 23S rRNA. In Stigeoclonium helveticum (Green alga), this protein is Large ribosomal subunit protein uL14c.